The chain runs to 146 residues: Large ribosomal subunit protein uL15 (146 aa).

Residues 1–59 (MRLEELKAPAGANKRTKRVGRGTGSGHGKTSTRGHKGQKSRSGGGVRPGFEGGQMPLQR) form a disordered region. Residues 30-39 (TSTRGHKGQK) show a composition bias toward basic residues. Positions 42–52 (SGGGVRPGFEG) are enriched in gly residues.

It belongs to the universal ribosomal protein uL15 family. As to quaternary structure, part of the 50S ribosomal subunit.

Binds to the 23S rRNA. The polypeptide is Large ribosomal subunit protein uL15 (Syntrophomonas wolfei subsp. wolfei (strain DSM 2245B / Goettingen)).